We begin with the raw amino-acid sequence, 381 residues long: Meiotic recombination protein SPO11-1 (381 aa).

In terms of domain architecture, Topo IIA-type catalytic spans 23–162; the sequence is EEAATLLHRI…LNVVPVAKGL (140 aa). The O-(5'-phospho-DNA)-tyrosine intermediate role is filled by Tyr123. Mg(2+) contacts are provided by Glu209 and Asp261.

Belongs to the TOP6A family. Mg(2+) is required as a cofactor. In terms of tissue distribution, highly expressed in flowers before pollination. Expressed in roots and shoots.

It is found in the nucleus. It catalyses the reaction ATP-dependent breakage, passage and rejoining of double-stranded DNA.. Its function is as follows. Required for meiotic recombination. Mediates DNA cleavage that forms the double-strand breaks (DSB) that initiate meiotic recombination. May be involved in plant growth and development, and stress tolerance. This Oryza sativa subsp. indica (Rice) protein is Meiotic recombination protein SPO11-1 (SPO11-1).